Reading from the N-terminus, the 590-residue chain is Selenoprotein N (590 aa).

Positions 1–26 (MGRARPGQRGPPSPGPAAQPPAPPRR) are disordered. The signal sequence occupies residues 1-43 (MGRARPGQRGPPSPGPAAQPPAPPRRRARSLALLGALLAAAAA). Pro residues predominate over residues 9–23 (RGPPSPGPAAQPPAP). The EF-hand domain maps to 67–102 (TLGTDGLFLFSSLDTDGDMYISPEEFKPIAEKLTGS). N126 is a glycosylation site (N-linked (GlcNAc...) asparagine). Position 127 (U127) is a non-standard amino acid, selenocysteine. A glycan (N-linked (GlcNAc...) asparagine) is linked at N190. Position 462 (U462) is a non-standard amino acid, selenocysteine. N483, N505, and N531 each carry an N-linked (GlcNAc...) asparagine glycan.

As to quaternary structure, interacts with RYR1, RYR2 and RYR3. N-glycosylated. In terms of tissue distribution, isoform 1 and isoform 2 are expressed in skeletal muscle, brain, lung and placenta. Isoform 2 is also expressed in heart, diaphragm and stomach.

Its subcellular location is the endoplasmic reticulum membrane. In terms of biological role, plays an important role in cell protection against oxidative stress and in the regulation of redox-related calcium homeostasis. Regulates the calcium level of the ER by protecting the calcium pump ATP2A2 against the oxidoreductase ERO1A-mediated oxidative damage. Within the ER, ERO1A activity increases the concentration of H(2)O(2), which attacks the luminal thiols in ATP2A2 and thus leads to cysteinyl sulfenic acid formation (-SOH) and SEPN1 reduces the SOH back to free thiol (-SH), thus restoring ATP2A2 activity. Acts as a modulator of ryanodine receptor (RyR) activity: protects RyR from oxidation due to increased oxidative stress, or directly controls the RyR redox state, regulating the RyR-mediated calcium mobilization required for normal muscle development and differentiation. Essential for muscle regeneration and satellite cell maintenance in skeletal muscle. The protein is Selenoprotein N of Homo sapiens (Human).